Consider the following 517-residue polypeptide: Alpha-amylase (517 aa).

The first 21 residues, M1 to G21, serve as a signal peptide directing secretion. A disulfide bridge links C52 with C108. Ca(2+) contacts are provided by N122, R178, and D187. R215 is a binding site for chloride. D217 serves as the catalytic Nucleophile. Position 221 (H221) interacts with Ca(2+). E253 serves as the catalytic Proton donor. R355 contacts chloride. 2 disulfides stabilise this stretch: C397-C403 and C470-C482.

The protein belongs to the glycosyl hydrolase 13 family. Monomer. The cofactor is Ca(2+). Chloride serves as cofactor.

Its subcellular location is the secreted. It catalyses the reaction Endohydrolysis of (1-&gt;4)-alpha-D-glucosidic linkages in polysaccharides containing three or more (1-&gt;4)-alpha-linked D-glucose units.. With respect to regulation, activated by chloride ions. Inhibited by acarbose. Not inhibited by wheat alpha-amylase inhibitors 1 (WI-1, the tetrameric form) or 3 (WI-3, the monomeric form) and bean alpha-amylase inhibitor 1 (alphaAI-1). The chain is Alpha-amylase from Acarus siro (Flour mite).